The primary structure comprises 346 residues: Anthocyanidin 3-O-glucosyltransferase 2 (346 aa).

Ala-221, Gln-223, His-238, Trp-241, Asn-242, Ser-243, and Glu-246 together coordinate UDP-alpha-D-glucose. Ala-261 is an an anthocyanidin binding site. UDP-alpha-D-glucose contacts are provided by Glu-262 and Gln-263.

Belongs to the UDP-glycosyltransferase family. As to expression, expressed in cotyledons, roots and leaves.

It carries out the reaction an anthocyanidin + UDP-alpha-D-glucose + H(+) = an anthocyanidin 3-O-beta-D-glucoside + UDP. The protein operates within pigment biosynthesis; anthocyanin biosynthesis. Functionally, in the presence of other necessary color factors, this glycosylation reaction allows the accumulation of anthocyanin pigments. The polypeptide is Anthocyanidin 3-O-glucosyltransferase 2 (GT2) (Manihot esculenta (Cassava)).